The chain runs to 520 residues: GMP synthase [glutamine-hydrolyzing] (520 aa).

In terms of domain architecture, Glutamine amidotransferase type-1 spans 9 to 202 (KILILDFGSQ…VRQICGCTGQ (194 aa)). Catalysis depends on Cys86, which acts as the Nucleophile. Residues His176 and Glu178 contribute to the active site. The 193-residue stretch at 203–395 (WTPGQIIEDA…LGLPHPMVYR (193 aa)) folds into the GMPS ATP-PPase domain. Position 230-236 (230-236 (SGGVDSS)) interacts with ATP.

Homodimer.

It catalyses the reaction XMP + L-glutamine + ATP + H2O = GMP + L-glutamate + AMP + diphosphate + 2 H(+). Its pathway is purine metabolism; GMP biosynthesis; GMP from XMP (L-Gln route): step 1/1. Its function is as follows. Catalyzes the synthesis of GMP from XMP. This Syntrophotalea carbinolica (strain DSM 2380 / NBRC 103641 / GraBd1) (Pelobacter carbinolicus) protein is GMP synthase [glutamine-hydrolyzing].